The sequence spans 449 residues: Putative transporter C83.11 (449 aa).

Helical transmembrane passes span 7 to 27, 47 to 67, 84 to 104, 109 to 129, 136 to 156, 164 to 184, 205 to 225, 255 to 275, and 278 to 298; these read LSHI…LWYI, VTLT…CLLF, VLYT…FGSL, IPVS…VLAY, VYSA…TLAC, IVGL…NIFG, LNLL…VWLY, ILAF…ASLI, and IFVI…TQGS. 2 positions are modified to phosphoserine: Ser-348 and Ser-352. Tyr-355 is subject to Phosphotyrosine. Positions 382-415 are enriched in polar residues; the sequence is NSVYSNEGVTSSVSGNATPASVRQSTQNDFSNSN. Residues 382 to 416 form a disordered region; sequence NSVYSNEGVTSSVSGNATPASVRQSTQNDFSNSNI.

This sequence belongs to the TPT transporter family.

It localises to the membrane. The chain is Putative transporter C83.11 from Schizosaccharomyces pombe (strain 972 / ATCC 24843) (Fission yeast).